A 443-amino-acid chain; its full sequence is Protein king tubby (443 aa).

Disordered stretches follow at residues Thr-57–Arg-80 and His-98–Val-191. The span at Ala-68–Arg-80 shows a compositional bias: polar residues. A compositionally biased stretch (low complexity) spans Gln-113 to Gln-128. Ser-136 is modified (phosphoserine). Positions Asn-177 to Glu-186 are enriched in gly residues.

This sequence belongs to the TUB family.

It is found in the cytoplasm. The protein resides in the nucleus. Its subcellular location is the cell projection. It localises to the cilium membrane. The protein localises to the rhabdomere. This is Protein king tubby from Drosophila simulans (Fruit fly).